The following is a 438-amino-acid chain: Anaerobic glycerol-3-phosphate dehydrogenase subunit B (438 aa).

Belongs to the anaerobic G-3-P dehydrogenase subunit B family. In terms of assembly, composed of a catalytic GlpA/B dimer and of membrane bound GlpC. It depends on FMN as a cofactor.

It carries out the reaction a quinone + sn-glycerol 3-phosphate = dihydroxyacetone phosphate + a quinol. Its pathway is polyol metabolism; glycerol degradation via glycerol kinase pathway; glycerone phosphate from sn-glycerol 3-phosphate (anaerobic route): step 1/1. Functionally, conversion of glycerol 3-phosphate to dihydroxyacetone. Uses fumarate or nitrate as electron acceptor. This chain is Anaerobic glycerol-3-phosphate dehydrogenase subunit B, found in Vibrio vulnificus (strain YJ016).